The primary structure comprises 276 residues: NH(3)-dependent NAD(+) synthetase (276 aa).

51–58 (GISGGVDS) lines the ATP pocket. D57 is a Mg(2+) binding site. R148 serves as a coordination point for deamido-NAD(+). T168 contributes to the ATP binding site. Residue E173 coordinates Mg(2+). The deamido-NAD(+) site is built by K181 and D188. Residues K197 and T219 each contribute to the ATP site. Position 268–269 (268–269 (HK)) interacts with deamido-NAD(+).

This sequence belongs to the NAD synthetase family. In terms of assembly, homodimer.

It carries out the reaction deamido-NAD(+) + NH4(+) + ATP = AMP + diphosphate + NAD(+) + H(+). The protein operates within cofactor biosynthesis; NAD(+) biosynthesis; NAD(+) from deamido-NAD(+) (ammonia route): step 1/1. In terms of biological role, catalyzes the ATP-dependent amidation of deamido-NAD to form NAD. Uses ammonia as a nitrogen source. This is NH(3)-dependent NAD(+) synthetase from Streptomyces coelicolor (strain ATCC BAA-471 / A3(2) / M145).